The following is a 272-amino-acid chain: tRNA pseudouridine synthase B (272 aa).

Residue aspartate 38 is the Nucleophile of the active site.

This sequence belongs to the pseudouridine synthase TruB family. Type 1 subfamily.

The enzyme catalyses uridine(55) in tRNA = pseudouridine(55) in tRNA. Functionally, responsible for synthesis of pseudouridine from uracil-55 in the psi GC loop of transfer RNAs. This Campylobacter jejuni subsp. jejuni serotype O:23/36 (strain 81-176) protein is tRNA pseudouridine synthase B.